A 1336-amino-acid polypeptide reads, in one-letter code: Aldehyde oxidase 4 (1336 aa).

The 2Fe-2S ferredoxin-type domain occupies Asp-8–Val-95. The [2Fe-2S] cluster site is built by Cys-47, Cys-52, Cys-55, and Cys-77. Gln-116 lines the Mo-molybdopterin pocket. Cys-117, Cys-120, Cys-152, and Cys-154 together coordinate [2Fe-2S] cluster. Cys-154 provides a ligand contact to Mo-molybdopterin. One can recognise an FAD-binding PCMH-type domain in the interval Phe-237–Gln-423. FAD is bound by residues Leu-265–Val-272, Ala-346, Thr-355, His-359, Asp-368, and Ile-413. Mo-molybdopterin-binding positions include Ala-804 to Phe-805, Leu-1045, Gly-1086 to Gly-1089, Gln-1201, and Leu-1265. Catalysis depends on Glu-1267, which acts as the Proton acceptor; for azaheterocycle hydroxylase activity.

It belongs to the xanthine dehydrogenase family. Homodimer. The cofactor is [2Fe-2S] cluster. FAD is required as a cofactor. It depends on Mo-molybdopterin as a cofactor. As to expression, highly expressed in Harderian glands and sebaceous glands with detectable levels in the epidermis and other keratinized epithelia (at protein level). Detected in testis. The expression is 3 times greater in females than in males.

The protein localises to the cytoplasm. It catalyses the reaction an aldehyde + O2 + H2O = a carboxylate + H2O2 + H(+). The enzyme catalyses retinal + O2 + H2O = retinoate + H2O2 + H(+). The catalysed reaction is all-trans-retinal + O2 + H2O = all-trans-retinoate + H2O2 + H(+). In terms of biological role, aldehyde oxidase able to catalyze the oxidation of retinaldehyde into retinoate. Is responsible for the major all-trans-retinaldehyde-metabolizing activity in the Harderian gland, and contributes a significant amount of the same activity in the skin. Is devoid of pyridoxal-oxidizing activity, in contrast to the other aldehyde oxidases. Acts as a negative modulator of the epidermal trophism. May be able to oxidize a wide variety of aldehydes into their corresponding carboxylates and to hydroxylate azaheterocycles. The chain is Aldehyde oxidase 4 (Aox4) from Mus musculus (Mouse).